Consider the following 381-residue polypeptide: Peptidoglycan glycosyltransferase MrdB (381 aa).

10 consecutive transmembrane segments (helical) span residues 11–31 (FDLL…LLIF), 40–60 (KQGV…FIPF), 66–86 (WLFV…FMGY), 99–119 (FISI…LLLA), 132–152 (YDWG…ALIL), 156–176 (DLGT…IVGL), 180–200 (VWLP…HFLH), 263–283 (FGFL…LHLF), 297–317 (IVAL…IAMT), and 328–348 (LPLF…FGIL).

Belongs to the SEDS family. MrdB/RodA subfamily.

It is found in the cell inner membrane. The catalysed reaction is [GlcNAc-(1-&gt;4)-Mur2Ac(oyl-L-Ala-gamma-D-Glu-L-Lys-D-Ala-D-Ala)](n)-di-trans,octa-cis-undecaprenyl diphosphate + beta-D-GlcNAc-(1-&gt;4)-Mur2Ac(oyl-L-Ala-gamma-D-Glu-L-Lys-D-Ala-D-Ala)-di-trans,octa-cis-undecaprenyl diphosphate = [GlcNAc-(1-&gt;4)-Mur2Ac(oyl-L-Ala-gamma-D-Glu-L-Lys-D-Ala-D-Ala)](n+1)-di-trans,octa-cis-undecaprenyl diphosphate + di-trans,octa-cis-undecaprenyl diphosphate + H(+). Its pathway is cell wall biogenesis; peptidoglycan biosynthesis. Its function is as follows. Peptidoglycan polymerase that is essential for cell wall elongation. This Helicobacter pylori (strain ATCC 700392 / 26695) (Campylobacter pylori) protein is Peptidoglycan glycosyltransferase MrdB.